The following is a 397-amino-acid chain: Pyridinium-3,5-bisthiocarboxylic acid mononucleotide nickel insertion protein (397 aa).

This sequence belongs to the LarC family.

The enzyme catalyses Ni(II)-pyridinium-3,5-bisthiocarboxylate mononucleotide = pyridinium-3,5-bisthiocarboxylate mononucleotide + Ni(2+). In terms of biological role, involved in the biosynthesis of a nickel-pincer cofactor ((SCS)Ni(II) pincer complex). Binds Ni(2+), and functions in nickel delivery to pyridinium-3,5-bisthiocarboxylic acid mononucleotide (P2TMN), to form the mature cofactor. Is thus probably required for the activation of nickel-pincer cofactor-dependent enzymes. This Thermotoga petrophila (strain ATCC BAA-488 / DSM 13995 / JCM 10881 / RKU-1) protein is Pyridinium-3,5-bisthiocarboxylic acid mononucleotide nickel insertion protein.